The following is a 124-amino-acid chain: Testis-expressed protein 54 (124 aa).

A compositionally biased stretch (basic and acidic residues) spans 1–10 (MGCCQDKDFE). Disordered regions lie at residues 1–77 (MGCC…SNES) and 90–124 (FGRRGSSRPSKRQPDQIRKQESPIREGNQEEPEKG). Acidic residues predominate over residues 11 to 30 (MSDEQSKEEESEDGREDETT). 2 stretches are compositionally biased toward basic and acidic residues: residues 34–50 (RGPRECERGLPEGRGEL) and 101–124 (RQPDQIRKQESPIREGNQEEPEKG).

Expressed in Testis.

The protein is Testis-expressed protein 54 of Homo sapiens (Human).